A 318-amino-acid chain; its full sequence is 4-diphosphocytidyl-2-C-methyl-D-erythritol kinase (318 aa).

Lys13 is a catalytic residue. Residue 101-111 (PVAGGMAGGSA) coordinates ATP. Asp143 is a catalytic residue. The tract at residues 298–318 (PGARLVTDDRADRPTPPQVHA) is disordered.

Belongs to the GHMP kinase family. IspE subfamily.

The catalysed reaction is 4-CDP-2-C-methyl-D-erythritol + ATP = 4-CDP-2-C-methyl-D-erythritol 2-phosphate + ADP + H(+). The protein operates within isoprenoid biosynthesis; isopentenyl diphosphate biosynthesis via DXP pathway; isopentenyl diphosphate from 1-deoxy-D-xylulose 5-phosphate: step 3/6. In terms of biological role, catalyzes the phosphorylation of the position 2 hydroxy group of 4-diphosphocytidyl-2C-methyl-D-erythritol. This Saccharopolyspora erythraea (strain ATCC 11635 / DSM 40517 / JCM 4748 / NBRC 13426 / NCIMB 8594 / NRRL 2338) protein is 4-diphosphocytidyl-2-C-methyl-D-erythritol kinase.